A 426-amino-acid chain; its full sequence is MLDSKLLRTQLQDVADRLASRGFTLDVARIESLEAQRKVVQTRTEQLQAERNARSKSIGQAKQRGEDIAPLMADVERMGNELSEGKVELDAIQAELDALVLNIPNLPHESVPVGADEEGNVEVRRWGTPTAFGFEVKDHVALGEKFGWLDFETAAKLSGARFALLRGPIARLHRALAQFMINLHINEHGYEETYTPYLVQAPALQGTGQLPKFEEDLFKISREGEADLYLIPTAEVSLTNIVSGEILDAKQLPLKFVAHTPCFRSEAGASGRDTRGMIRQHQFDKVEMVQIVAPDDSMAALESLTGNAERVLQLLELPYRTLALCTGDMGFSAVKTYDLEVWIPSQDKYREISSCSNCGDFQARRMQARWRNPETGKPELVHTLNGSGLAVGRTLVAVLENYQQADGSIRVPEVLKPYMGGLEVIG.

233 to 235 (TAE) contributes to the L-serine binding site. 264–266 (RSE) is an ATP binding site. Residue Glu-287 coordinates L-serine. ATP is bound at residue 351-354 (EISS). L-serine is bound at residue Ser-387.

It belongs to the class-II aminoacyl-tRNA synthetase family. Type-1 seryl-tRNA synthetase subfamily. As to quaternary structure, homodimer. The tRNA molecule binds across the dimer.

Its subcellular location is the cytoplasm. The catalysed reaction is tRNA(Ser) + L-serine + ATP = L-seryl-tRNA(Ser) + AMP + diphosphate + H(+). The enzyme catalyses tRNA(Sec) + L-serine + ATP = L-seryl-tRNA(Sec) + AMP + diphosphate + H(+). It participates in aminoacyl-tRNA biosynthesis; selenocysteinyl-tRNA(Sec) biosynthesis; L-seryl-tRNA(Sec) from L-serine and tRNA(Sec): step 1/1. In terms of biological role, catalyzes the attachment of serine to tRNA(Ser). Is also able to aminoacylate tRNA(Sec) with serine, to form the misacylated tRNA L-seryl-tRNA(Sec), which will be further converted into selenocysteinyl-tRNA(Sec). The sequence is that of Serine--tRNA ligase from Pseudomonas syringae pv. tomato (strain ATCC BAA-871 / DC3000).